A 231-amino-acid polypeptide reads, in one-letter code: Large ribosomal subunit protein uL1 (231 aa).

This sequence belongs to the universal ribosomal protein uL1 family. In terms of assembly, part of the 50S ribosomal subunit.

In terms of biological role, binds directly to 23S rRNA. The L1 stalk is quite mobile in the ribosome, and is involved in E site tRNA release. Functionally, protein L1 is also a translational repressor protein, it controls the translation of the L11 operon by binding to its mRNA. The chain is Large ribosomal subunit protein uL1 from Cellvibrio japonicus (strain Ueda107) (Pseudomonas fluorescens subsp. cellulosa).